We begin with the raw amino-acid sequence, 334 residues long: tRNA N6-adenosine threonylcarbamoyltransferase (334 aa).

Fe cation contacts are provided by His110 and His114. Substrate contacts are provided by residues 133–137, Asp166, Gly179, Asp183, and Asn275; that span reads IVSGG. Asp303 contacts Fe cation.

The protein belongs to the KAE1 / TsaD family. Requires Fe(2+) as cofactor.

It is found in the cytoplasm. The enzyme catalyses L-threonylcarbamoyladenylate + adenosine(37) in tRNA = N(6)-L-threonylcarbamoyladenosine(37) in tRNA + AMP + H(+). Required for the formation of a threonylcarbamoyl group on adenosine at position 37 (t(6)A37) in tRNAs that read codons beginning with adenine. Is involved in the transfer of the threonylcarbamoyl moiety of threonylcarbamoyl-AMP (TC-AMP) to the N6 group of A37, together with TsaE and TsaB. TsaD likely plays a direct catalytic role in this reaction. The protein is tRNA N6-adenosine threonylcarbamoyltransferase of Salinibacter ruber (strain DSM 13855 / M31).